A 961-amino-acid chain; its full sequence is MEVAAVSATSRPLSPLLSTAPARRLRLLPPRCVFGRRLRASPRTRASVEPATQELGTAGAGEWSGDAIRRRFLEFYAARGHKILPSSSLVPDDPTVLLTIAGMLQFKPIFLGKEPRRVPCATTSQKCIRTNDIENVGRTARHQTFFEMLGNFSFGDYFKKEATAWAWELATKEYGLPAERLWISVFEDDNEAFDIWHNEVGVPKERIKRMGAEDNFWTSGATGPCGPCSEIYYDFYPERGSSDADLGDDSRFIEFYNLVFMQYNKKDDGSLEPLKQKNIDTGMGLERMARILQKVPNNYETDLIFPIIEKAASMAMVSYAKTDDATKTNLKIIGDHMRAVVYLVSDGVIPSNIGRGYVVRRLIRRVVRMGRLIGIRGDGHGNSEGAFLPSLAEVVISLSTEIDPDVESRRRSILGELQREELRFVQTLERGEKLLDELLDGAVLSAGNNGDKPSLSGKDLFLLYDTYGFPVEITAEIASERGVTVDIEGFDIEMENQRKQSQAAHNVVKLSVGNETEIIKSIPDTVFLGYDSLSASAVVRGLLVNGNPVNEVSEGSEVEILLDRTPFYAESGGQVGDNGFLYVNGGEDRSQAAVIEINDVQKSLGNIFVHKGTIKQGSVEVGKEVDACVDAKLRQGAKAHHTATHLLQSALKSVVGSETSQAGSLVAFDRLRFDFNFHRPVSEGELTRIELLVNQWISNAAHLETKVMALQDAKNAGAIAMFGEKYGEQVRVVEVPGVSLELCGGTHVSNTAEIRGFKIISEQGIASGIRRIEAVAGDAFIDYVCARDNYMRRLCSSLKVKAEDVNGRVETILEELRATRNEVSSLRSKIAVLKAASLASKATTVEPQNVRIVVENMGDVDADGLKSAAEYLIGTLQDPAAVILGSSPGDGKVSLVAAFSPAVVKMGLQAGKFVGGIAKLCGGGGGGKPNFAQAGGRKPENLPDALEKARAEIVAGVSSSS.

His-641, His-645, Cys-743, and His-747 together coordinate Zn(2+).

It belongs to the class-II aminoacyl-tRNA synthetase family. As to quaternary structure, monomer. Zn(2+) is required as a cofactor.

Its subcellular location is the plastid. It localises to the chloroplast. The protein resides in the mitochondrion. The catalysed reaction is tRNA(Ala) + L-alanine + ATP = L-alanyl-tRNA(Ala) + AMP + diphosphate. Its function is as follows. Catalyzes the attachment of alanine to tRNA(Ala) in a two-step reaction: alanine is first activated by ATP to form Ala-AMP and then transferred to the acceptor end of tRNA(Ala). Also edits incorrectly charged tRNA(Ala) via its editing domain. The chain is Alanine--tRNA ligase, chloroplastic/mitochondrial from Sorghum bicolor (Sorghum).